Consider the following 217-residue polypeptide: T-complex protein 10A homolog 1 (217 aa).

Residues 1 to 26 (MLAGQLEARDPKEGTHPEDPCPGAGA) form a disordered region. Positions 7 to 19 (EARDPKEGTHPED) are enriched in basic and acidic residues. A coiled-coil region spans residues 69-110 (ADVHGKLRSHIDALREQNMELREKLRALQLQRWKARKKSAAS). Residues 75–96 (LRSHIDALREQNMELREKLRAL) form a leucine-zipper region. Residues 175 to 192 (ERISSWKTPPQEKRDKSL) are compositionally biased toward basic and acidic residues. The segment at 175-217 (ERISSWKTPPQEKRDKSLSRRRQDRRATPTGRPTPCAERRGGV) is disordered.

This sequence belongs to the TCP10 family. As to quaternary structure, self-associates (via leucine zipper). Interacts (via leucine zipper) with ZIPK/DAPK3 (via leucine zipper). Interacts with MAD4.

It localises to the nucleus. Its function is as follows. May be involved in transcriptional regulation. Has in vitro transcription inhibition activity. This chain is T-complex protein 10A homolog 1 (TCP10L), found in Pan troglodytes (Chimpanzee).